A 322-amino-acid polypeptide reads, in one-letter code: Lipoyl synthase (322 aa).

Residues C61, C66, C72, C87, C91, C94, and S300 each contribute to the [4Fe-4S] cluster site. The Radical SAM core domain occupies 73–289 (WDKKHATFMI…ETVAYTKGFL (217 aa)).

It belongs to the radical SAM superfamily. Lipoyl synthase family. Requires [4Fe-4S] cluster as cofactor.

The protein resides in the cytoplasm. It catalyses the reaction [[Fe-S] cluster scaffold protein carrying a second [4Fe-4S](2+) cluster] + N(6)-octanoyl-L-lysyl-[protein] + 2 oxidized [2Fe-2S]-[ferredoxin] + 2 S-adenosyl-L-methionine + 4 H(+) = [[Fe-S] cluster scaffold protein] + N(6)-[(R)-dihydrolipoyl]-L-lysyl-[protein] + 4 Fe(3+) + 2 hydrogen sulfide + 2 5'-deoxyadenosine + 2 L-methionine + 2 reduced [2Fe-2S]-[ferredoxin]. The protein operates within protein modification; protein lipoylation via endogenous pathway; protein N(6)-(lipoyl)lysine from octanoyl-[acyl-carrier-protein]: step 2/2. Catalyzes the radical-mediated insertion of two sulfur atoms into the C-6 and C-8 positions of the octanoyl moiety bound to the lipoyl domains of lipoate-dependent enzymes, thereby converting the octanoylated domains into lipoylated derivatives. The chain is Lipoyl synthase from Rhizobium meliloti (strain 1021) (Ensifer meliloti).